A 521-amino-acid chain; its full sequence is Proactivator polypeptide-like 1 (521 aa).

The signal sequence occupies residues 1-17 (MLCALLLLPSLLGATRA). Residues 18–59 (SPTSGPQECAKGSTVWCQDLQTAARCGAVGYCQGAVWNKPTA) constitute a propeptide that is removed on maturation. Positions 19-59 (PTSGPQECAKGSTVWCQDLQTAARCGAVGYCQGAVWNKPTA) constitute a Saposin A-type 1 domain. 2 Saposin B-type domains span residues 60-144 (KSLP…EPLQ) and 180-258 (EGAL…EELG). 3 cysteine pairs are disulfide-bonded: Cys64–Cys140, Cys67–Cys134, and Cys95–Cys107. Positions 146-180 (HLATLRPLSKEDTFEAVAPFMANGPLTFHPRQAPE) are excised as a propeptide. 3 cysteine pairs are disulfide-bonded: Cys184–Cys254, Cys187–Cys248, and Cys213–Cys224. N-linked (GlcNAc...) asparagine glycosylation occurs at Asn201. Positions 259 to 288 (APARLTQVVAMDGVPSLELGLPRKQSEMQM) are excised as a propeptide. Saposin B-type domains lie at 290-370 (AGVT…GNRR) and 392-473 (QGSF…HGPR). 3 disulfide bridges follow: Cys294–Cys366, Cys297–Cys360, and Cys325–Cys336. An N-linked (GlcNAc...) asparagine glycan is attached at Asn311. The propeptide occupies 370–391 (RRARAVHDAYAIVPSPEWDAEN). 3 disulfides stabilise this stretch: Cys396–Cys469, Cys399–Cys463, and Cys427–Cys438. The propeptide occupies 474–521 (TPLLGTDQCALGPSFWCRSQEAAKLCNAVQHCQKHVWKEMHLHAGEHA). The Saposin A-type 2 domain maps to 475-515 (PLLGTDQCALGPSFWCRSQEAAKLCNAVQHCQKHVWKEMHL).

The protein resides in the secreted. Functionally, may activate the lysosomal degradation of sphingolipids. The protein is Proactivator polypeptide-like 1 (PSAPL1) of Homo sapiens (Human).